A 588-amino-acid chain; its full sequence is Aspartate--tRNA ligase (588 aa).

Glu171 contributes to the L-aspartate binding site. Residues 195–198 (QLFK) are aspartate. Arg217 provides a ligand contact to L-aspartate. ATP-binding positions include 217–219 (RDE) and Gln226. His447 contacts L-aspartate. Glu481 contributes to the ATP binding site. An L-aspartate-binding site is contributed by Arg488. 533 to 536 (GLDR) is an ATP binding site.

Belongs to the class-II aminoacyl-tRNA synthetase family. Type 1 subfamily. In terms of assembly, homodimer.

The protein localises to the cytoplasm. It catalyses the reaction tRNA(Asp) + L-aspartate + ATP = L-aspartyl-tRNA(Asp) + AMP + diphosphate. Its function is as follows. Catalyzes the attachment of L-aspartate to tRNA(Asp) in a two-step reaction: L-aspartate is first activated by ATP to form Asp-AMP and then transferred to the acceptor end of tRNA(Asp). The polypeptide is Aspartate--tRNA ligase (Aeromonas salmonicida (strain A449)).